The sequence spans 1366 residues: DNA-directed RNA polymerase subunit beta' (1366 aa).

Residues 1–20 (MTSSKPKKTSRVRKTTKNSK) are compositionally biased toward basic residues. The segment at 1–33 (MTSSKPKKTSRVRKTTKNSKKNNPVTMPALAKT) is disordered. Zn(2+) contacts are provided by Cys-248, Cys-315, Cys-322, and Cys-325. The tract at residues 1291–1366 (YTVDMPQSPA…LQEEGLLSDE (76 aa)) is disordered. Residues 1354–1366 (LEGLQEEGLLSDE) are compositionally biased toward low complexity.

Belongs to the RNA polymerase beta' chain family. RpoC2 subfamily. As to quaternary structure, in cyanobacteria the RNAP catalytic core is composed of 2 alpha, 1 beta, 1 beta', 1 gamma and 1 omega subunit. When a sigma factor is associated with the core the holoenzyme is formed, which can initiate transcription. Zn(2+) serves as cofactor.

The enzyme catalyses RNA(n) + a ribonucleoside 5'-triphosphate = RNA(n+1) + diphosphate. Its function is as follows. DNA-dependent RNA polymerase catalyzes the transcription of DNA into RNA using the four ribonucleoside triphosphates as substrates. The protein is DNA-directed RNA polymerase subunit beta' of Prochlorococcus marinus (strain AS9601).